The chain runs to 656 residues: Nuclear elongation and deformation protein 1 (656 aa).

Phosphoserine is present on residues Ser99 and Ser103. Polar residues predominate over residues 99–118; sequence SPIVSPTTSPKQTPSINVTE. Residues 99–121 are disordered; sequence SPIVSPTTSPKQTPSINVTEPQD. A Phosphothreonine modification is found at Thr106. Residues Ser107, Ser159, and Ser286 each carry the phosphoserine modification. Disordered regions lie at residues 282-328 and 587-656; these read VYGH…VSES and SDEE…ENAV. Low complexity predominate over residues 291-300; it reads PSRTPASPKS. 3 positions are modified to phosphoserine: Ser318, Ser321, and Ser587. The segment covering 318-328 has biased composition (polar residues); it reads SEQSLSPVSES. Over residues 596-609 the composition is skewed to low complexity; that stretch reads KSTSKSPKTPKNTK. The span at 640–656 shows a compositional bias: acidic residues; it reads FEGEEDEEGEEDVENAV.

It belongs to the lipin family. In terms of assembly, interacts with dis3, pim1 and nup189.

Functionally, may have a role in the maintenance of the nuclear envelope structure and in minichromosome stability. The polypeptide is Nuclear elongation and deformation protein 1 (ned1) (Schizosaccharomyces pombe (strain 972 / ATCC 24843) (Fission yeast)).